The following is an 851-amino-acid chain: DNA mismatch repair protein MutS (851 aa).

Position 602-609 (602-609 (GPNMSGKS)) interacts with ATP.

Belongs to the DNA mismatch repair MutS family.

This protein is involved in the repair of mismatches in DNA. It is possible that it carries out the mismatch recognition step. This protein has a weak ATPase activity. This Streptococcus pyogenes serotype M4 (strain MGAS10750) protein is DNA mismatch repair protein MutS.